Consider the following 430-residue polypeptide: Glial fibrillary acidic protein (430 aa).

A head region spans residues Met1–Glu69. Thr7 carries the post-translational modification Phosphothreonine; by AURKB and ROCK1. Arg11 carries the omega-N-methylarginine modification. The residue at position 12 (Ser12) is a Phosphoserine; by AURKB and ROCK1. Arg20 carries the omega-N-methylarginine modification. Arg33 is modified (citrulline). Ser35 is subject to Phosphoserine; by AURKB and ROCK1. Position 40 is a phosphothreonine (Thr40). An IF rod domain is found at Glu66 to Ile374. A coil 1A region spans residues Met70 to Leu101. Ser79 carries the phosphoserine modification. The tract at residues Arg102 to Val112 is linker 1. Phosphothreonine is present on residues Thr107 and Thr147. The segment at Tyr113–Gln211 is coil 1B. The tract at residues Leu212–Asp227 is linker 12. The segment at Leu228–Glu249 is coil 2A. The linker 2 stretch occupies residues Thr250–Trp253. The tract at residues Tyr254–Ile374 is coil 2B. Ser266 carries the post-translational modification Phosphoserine. Arg267 carries the citrulline modification. Ser320 is modified (phosphoserine). The segment at Thr375–Met430 is tail. The residue at position 380 (Thr380) is a Phosphothreonine. Ser382 carries the post-translational modification Phosphoserine. 2 positions are modified to citrulline: Arg403 and Arg413.

This sequence belongs to the intermediate filament family. Interacts with SYNM. As to quaternary structure, interacts with PSEN1 (via N-terminus). Phosphorylated by PKN1. In terms of tissue distribution, brain; isoform 2 expressed at 20-fold lower level than isoform 1.

The protein resides in the cytoplasm. In terms of biological role, GFAP, a class-III intermediate filament, is a cell-specific marker that, during the development of the central nervous system, distinguishes astrocytes from other glial cells. The sequence is that of Glial fibrillary acidic protein (Gfap) from Mus musculus (Mouse).